A 125-amino-acid chain; its full sequence is Small ribosomal subunit protein uS12m (125 aa).

Residues 1 to 50 (MPSLNQLIRHGREEKRRTDRTRALDQCPQKQGVCPRVSTRTPKKPNSAPR) are disordered. Positions 10 to 23 (HGREEKRRTDRTRA) are enriched in basic and acidic residues.

The protein belongs to the universal ribosomal protein uS12 family.

It is found in the mitochondrion. Its function is as follows. Protein S12 is involved in the translation initiation step. The protein is Small ribosomal subunit protein uS12m (RPS12) of Petunia hybrida (Petunia).